The following is a 205-amino-acid chain: MKMQSNVIKIIIVISLLIGVGALYLLLSLRTPEKPLAGQVNIYEDNVKIGGDFELIDQNGEIFNSDELKGNLSLIYFGFTSCPDICPTSLNKMTEIVEILNKHKIDILPVFITIDPKRDTPIVLKEYLKHFHPKFIGLTGNEQQIKGVTDKFKVFYARVNGDDDDPNYMLDHSSFTYLIDANGKYLKHFYLDSSPKEIMEFLKGN.

Positions 82, 86, and 172 each coordinate Cu cation.

It belongs to the SCO1/2 family.

The chain is SCO2-like protein RF_0960 from Rickettsia felis (strain ATCC VR-1525 / URRWXCal2) (Rickettsia azadi).